The following is a 439-amino-acid chain: Xylose isomerase (439 aa).

Active-site residues include His101 and Asp104. Residues Glu232, Glu268, His271, Asp296, Asp307, Asp309, and Asp339 each coordinate Mg(2+).

It belongs to the xylose isomerase family. Homotetramer. Requires Mg(2+) as cofactor.

The protein resides in the cytoplasm. It catalyses the reaction alpha-D-xylose = alpha-D-xylulofuranose. The sequence is that of Xylose isomerase from Pseudoalteromonas atlantica (strain T6c / ATCC BAA-1087).